A 341-amino-acid polypeptide reads, in one-letter code: uncharacterized protein (341 aa).

4 WD repeats span residues 19–59 (SLGS…QVHT), 106–145 (GHTD…RCLG), 252–293 (PFSN…HHKG), and 303–341 (VSQS…ALTS).

It localises to the cytoplasm. It is found in the nucleus. This is an uncharacterized protein from Schizosaccharomyces pombe (strain 972 / ATCC 24843) (Fission yeast).